The following is a 322-amino-acid chain: tRNA uridine(34) hydroxylase (322 aa).

The 95-residue stretch at 125-219 folds into the Rhodanese domain; it reads QQEDTIVVDA…YGKDPEVQGE (95 aa). The active-site Cysteine persulfide intermediate is the Cys179.

Belongs to the TrhO family.

The catalysed reaction is uridine(34) in tRNA + AH2 + O2 = 5-hydroxyuridine(34) in tRNA + A + H2O. In terms of biological role, catalyzes oxygen-dependent 5-hydroxyuridine (ho5U) modification at position 34 in tRNAs. The sequence is that of tRNA uridine(34) hydroxylase from Bacillus licheniformis (strain ATCC 14580 / DSM 13 / JCM 2505 / CCUG 7422 / NBRC 12200 / NCIMB 9375 / NCTC 10341 / NRRL NRS-1264 / Gibson 46).